The sequence spans 100 residues: MSKLFDSRLADVIRKPVITEKATNALDLNQYTFEVDHRAAKPQIKAAIEALFSVKVIGVNTMNPPRRTRRVGKFSGKRSQVKKAIVRLAEGDKIQLFPES.

It belongs to the universal ribosomal protein uL23 family. As to quaternary structure, part of the 50S ribosomal subunit. Contacts protein L29, and trigger factor when it is bound to the ribosome.

Its function is as follows. One of the early assembly proteins it binds 23S rRNA. One of the proteins that surrounds the polypeptide exit tunnel on the outside of the ribosome. Forms the main docking site for trigger factor binding to the ribosome. The polypeptide is Large ribosomal subunit protein uL23 (Prochlorococcus marinus (strain MIT 9312)).